Consider the following 358-residue polypeptide: N-acylethanolamine-hydrolyzing acid amidase (358 aa).

Residues 1 to 26 form the signal peptide; sequence MQGTGHPVRPVLELLLLLLLLAGVGG. Residues asparagine 39 and asparagine 108 are each glycosylated (N-linked (GlcNAc...) asparagine). The Nucleophile role is filled by cysteine 127. 3 N-linked (GlcNAc...) asparagine glycosylation sites follow: asparagine 310, asparagine 334, and asparagine 356.

The protein belongs to the acid ceramidase family. In terms of assembly, heterodimer of an alpha and a beta subunit, produced by autocatalytic cleavage. In terms of processing, N-glycosylated. Tunicamycin treatment causes a reduction in specific activity against N-palmitoylethanolamine. Post-translationally, autoproteolytic cleavage at pH 4.5 gives rise to the alpha and beta subunit. Cleavage gives rise to a conformation change that activates the enzyme. The same catalytic Cys residue mediates the autoproteolytic cleavage and subsequent hydrolysis of lipid substrates.

It localises to the lysosome. Its subcellular location is the membrane. It catalyses the reaction N-hexadecanoylethanolamine + H2O = ethanolamine + hexadecanoate. The enzyme catalyses an N-(long-chain fatty acyl)ethanolamine + H2O = a long-chain fatty acid + ethanolamine. It carries out the reaction N-dodecanoylethanolamine + H2O = dodecanoate + ethanolamine. The catalysed reaction is N-tetradecanoylethanolamine + H2O = tetradecanoate + ethanolamine. It catalyses the reaction an N-acylsphing-4-enine + H2O = sphing-4-enine + a fatty acid. The enzyme catalyses N-hexadecanoylsphing-4-enine + H2O = sphing-4-enine + hexadecanoate. It carries out the reaction N-dodecanoylsphing-4-enine + H2O = dodecanoate + sphing-4-enine. The protein operates within lipid metabolism; fatty acid metabolism. Degrades bioactive fatty acid amides to their corresponding acids, with the following preference: N-palmitoylethanolamine &gt; N-myristoylethanolamine &gt; N-stearoylethanolamine &gt; N-oleoylethanolamine &gt; N-linoleoylethanolamine &gt; N-arachidonoylethanolamine. The chain is N-acylethanolamine-hydrolyzing acid amidase from Oryctolagus cuniculus (Rabbit).